A 278-amino-acid polypeptide reads, in one-letter code: Small ribosomal subunit protein uS2 (278 aa).

An N-acetylserine modification is found at S2. The interval 258-278 is disordered; sequence TNEGKTAADEWATGAQTQSNW.

It belongs to the universal ribosomal protein uS2 family. Component of the small ribosomal subunit. Mature ribosomes consist of a small (40S) and a large (60S) subunit. The 40S subunit contains about 33 different proteins and 1 molecule of RNA (18S). The 60S subunit contains about 49 different proteins and 3 molecules of RNA (28S, 5.8S and 5S). Interacts with rps-21.

Its subcellular location is the cytoplasm. Functionally, required for the assembly and/or stability of the 40S ribosomal subunit. Required for the processing of the 20S rRNA-precursor to mature 18S rRNA in a late step of the maturation of 40S ribosomal subunits. This chain is Small ribosomal subunit protein uS2, found in Caenorhabditis briggsae.